Reading from the N-terminus, the 446-residue chain is Cytochrome P450 monooxygenase ATR14 (446 aa).

The interval 403 to 446 (NFTYPDEFRPDRWLDDRDQKEYEHDHGDAMQPFSVGPRDCPSQK) is disordered. A compositionally biased stretch (basic and acidic residues) spans 408–430 (DEFRPDRWLDDRDQKEYEHDHGD). Cysteine 442 provides a ligand contact to heme.

This sequence belongs to the cytochrome P450 family. Requires heme as cofactor.

It functions in the pathway mycotoxin biosynthesis. Its function is as follows. Cytochrome P450 monooxygenase; part of the core atranone cluster (CAC) which products are predicted to catalyze most or all steps of mycotoxin atranone synthesis, starting from geranylgeranyl pyrophosphate (GGPP). The initial cyclization of GGPP to dolabellane is probably performed by the terpene cyclase ATR13. The Baeyer-Villiger oxidation near the end of the atranone synthesis, which converts atranones D and E to atranones F and G is predicted to be catalyzed by the monooxygenase ATR8. Of the CAC's other predicted gene products, the reducing PKS ATR6 might synthesize a polyketide chain. This polyketide is probably transferred onto the atranone backbone by the polyketide transferase ATR5. Other predicted CAC products include 4 oxygenases (ATR2, ATR3, ATR4, and ATR14), 3 short-chain reductases (ATR7, ATR9, and ATR10), and a methyltransferase (ATR12). These may all be involved in the various steps of atranone biosynthesis, although their specific roles must await experimental determination. In Stachybotrys chlorohalonatus (strain IBT 40285), this protein is Cytochrome P450 monooxygenase ATR14.